The sequence spans 245 residues: Flavin-dependent thymidylate synthase (245 aa).

The 215-residue stretch at 6–220 (PRVELLAHTP…PELFAHAGAK (215 aa)) folds into the ThyX domain. FAD contacts are provided by residues Ser-65, 89-91 (RHR), and Gln-97. DUMP contacts are provided by residues 86-89 (QLVR), 97-101 (QQSQR), and Arg-159. The ThyX motif motif lies at 89-99 (RHRIASFSQQS). FAD-binding positions include 175-177 (NCR) and His-181. Arg-186 contacts dUMP. Arg-186 acts as the Involved in ionization of N3 of dUMP, leading to its activation in catalysis.

It belongs to the thymidylate synthase ThyX family. As to quaternary structure, homotetramer. The cofactor is FAD.

The catalysed reaction is dUMP + (6R)-5,10-methylene-5,6,7,8-tetrahydrofolate + NADPH + H(+) = dTMP + (6S)-5,6,7,8-tetrahydrofolate + NADP(+). It functions in the pathway pyrimidine metabolism; dTTP biosynthesis. Functionally, catalyzes the reductive methylation of 2'-deoxyuridine-5'-monophosphate (dUMP) to 2'-deoxythymidine-5'-monophosphate (dTMP) while utilizing 5,10-methylenetetrahydrofolate (mTHF) as the methyl donor, and NADPH and FADH(2) as the reductant. The polypeptide is Flavin-dependent thymidylate synthase (Nitratidesulfovibrio vulgaris (strain ATCC 29579 / DSM 644 / CCUG 34227 / NCIMB 8303 / VKM B-1760 / Hildenborough) (Desulfovibrio vulgaris)).